The primary structure comprises 304 residues: MASMTPAEMARVLGSGLLSFPVTHFRDDLSFDETAYRDNLGRLADYKVSGLFAAGGTGEFFSLTPAEIDRVLRAAVEETRGRTPVIAPAGQGTALAVEMARAAEAAGADGILLLPPYLVGSEQAGLAAHIEAVCRATALGIIVYNRANAQLDERTLAGLCERCPNLVGFKDGVGDVELMTRVYAALGDRLTYIGGLPTAETFALPYLEMGVTTYSSAIFNFLPEWALSFYDSVRRRDRDAVYRELRDFVLPYIAIRNRKRGYAVSIVKAGMSAVGRHAGPVRPPLTELDAAERAELTALIGDRR.

This sequence belongs to the DapA family.

It carries out the reaction 5-dehydro-4-deoxy-D-glucarate + H(+) = 2,5-dioxopentanoate + CO2 + H2O. Its pathway is carbohydrate acid metabolism; D-glucarate degradation; 2,5-dioxopentanoate from D-glucarate: step 2/2. This chain is Probable 5-dehydro-4-deoxyglucarate dehydratase, found in Methylobacterium radiotolerans (strain ATCC 27329 / DSM 1819 / JCM 2831 / NBRC 15690 / NCIMB 10815 / 0-1).